The chain runs to 99 residues: Prostate and testis expressed protein 4 (99 aa).

A signal peptide spans 1–23 (MNSVTKISTLLIVILSFLCFVEG). The 76-residue stretch at 24-99 (LICNSCEKSR…CCEKNLCNSF (76 aa)) folds into the UPAR/Ly6 domain. 4 disulfides stabilise this stretch: Cys-26–Cys-52, Cys-29–Cys-37, Cys-44–Cys-70, and Cys-74–Cys-90.

Expressed in prostate, testis, eye, kidney and skeletal muscle. Expressed in the dorsal lobe of prostate. Not expressed in the ventral lobe of prostate.

It is found in the secreted. Functionally, enhances sperm motility. Binds to calmodulin and inhibits calcium transport into spermatozoa. May modulate the function of nicotinic acetylcholine receptors. This is Prostate and testis expressed protein 4 (Pate4) from Mus musculus (Mouse).